A 127-amino-acid chain; its full sequence is uncharacterized protein (127 aa).

A signal peptide spans 1 to 16 (MIKKIIFGIAILLSTS). Residue C17 is the site of N-palmitoyl cysteine attachment. The S-diacylglycerol cysteine moiety is linked to residue C17. Residues 56-101 (EVREEIQKYRVAIVKINKKKRELYNRLSKEAQNFLAEQQKYKQKLS) adopt a coiled-coil conformation. Positions 107-118 (VENDQKNNTADS) are enriched in polar residues. A disordered region spans residues 107–127 (VENDQKNNTADSNDNKSKDTK).

Its subcellular location is the cell membrane. This is an uncharacterized protein from Rickettsia conorii (strain ATCC VR-613 / Malish 7).